Consider the following 500-residue polypeptide: Pyruvate kinase 1 (500 aa).

S2 carries the post-translational modification N-acetylserine. Phosphoserine is present on residues S9 and S16. A Phosphothreonine modification is found at T31. R49 provides a ligand contact to substrate. K(+)-binding residues include N51 and S53. 51 to 54 contributes to the ATP binding site; that stretch reads NFSH. S70 carries the post-translational modification Phosphoserine. K(+) contacts are provided by D84 and T85. R91 contributes to the ATP binding site. Glycyl lysine isopeptide (Lys-Gly) (interchain with G-Cter in URM1) cross-links involve residues K119, K124, K161, K164, and K166. K177 lines the ATP pocket. Phosphothreonine is present on T184. Residue K204 forms a Glycyl lysine isopeptide (Lys-Gly) (interchain with G-Cter in ubiquitin) linkage. S213 is subject to Phosphoserine. Position 240 (K240) interacts with substrate. E242 serves as a coordination point for Mn(2+). K255 is covalently cross-linked (Glycyl lysine isopeptide (Lys-Gly) (interchain with G-Cter in ubiquitin)). The substrate site is built by G265 and D266. D266 is a binding site for Mn(2+). K292 is covalently cross-linked (Glycyl lysine isopeptide (Lys-Gly) (interchain with G-Cter in URM1)). T298 contributes to the substrate binding site. The residue at position 316 (S316) is a Phosphoserine. Residue K394 forms a Glycyl lysine isopeptide (Lys-Gly) (interchain with G-Cter in URM1) linkage. 402 to 407 contacts beta-D-fructose 1,6-bisphosphate; the sequence is STSGTT. Cysteine persulfide is present on C418. Residue K446 forms a Glycyl lysine isopeptide (Lys-Gly) (interchain with G-Cter in ubiquitin); alternate linkage. K446 is covalently cross-linked (Glycyl lysine isopeptide (Lys-Gly) (interchain with G-Cter in URM1); alternate). Residue S450 is modified to Phosphoserine. Residues W452 and R459 each contribute to the beta-D-fructose 1,6-bisphosphate site. T478 carries the post-translational modification Phosphothreonine. G484 is a beta-D-fructose 1,6-bisphosphate binding site.

Belongs to the pyruvate kinase family. Homotetramer. Mg(2+) serves as cofactor. The cofactor is K(+). Post-translationally, conjugated to URM1, a ubiquitin-like protein, in response to oxidative stresses. The attachment of URM1 to lysine residues exclusively depends on the presence of a peroxidatic cysteine in the target protein, with low specificity for the particular residue, motif, or structural context at which urmylation can occur. The URM1-conjugation reaction is mechanistically and directly coupled to the process of cysteine persulfidation, transfering the sulfur atom of the URM1 thiocarboxyl group to redox-active cysteine residues in the target protein if it is exposed to oxidative conditions. In terms of processing, persulfidated on specific redox-active cysteine residues. Persulfidation (also called protein S-sulfhydration) may provide a molecular mechanism that enables cells to protect vulnerable cysteine residues from reactive oxygen species (ROS) under stress conditions.

It catalyses the reaction pyruvate + ATP = phosphoenolpyruvate + ADP + H(+). It participates in carbohydrate degradation; glycolysis; pyruvate from D-glyceraldehyde 3-phosphate: step 5/5. With respect to regulation, the activity is regulated by glucose levels. Activated by fructose-1,6-bisphosphate. This chain is Pyruvate kinase 1 (CDC19), found in Saccharomyces cerevisiae (strain ATCC 204508 / S288c) (Baker's yeast).